The sequence spans 592 residues: Sodium- and chloride-dependent transporter XTRP3 (592 aa).

Topologically, residues 1-5 are cytoplasmic; the sequence is MEKAR. A helical transmembrane segment spans residues 6 to 26; the sequence is PLWANSLQFVFACISYAVGLG. The Extracellular segment spans residues 27–42; it reads NVWRFPYLCQMYGGGS. The chain crosses the membrane as a helical span at residues 43–63; it reads FLVPYIIMLIVEGMPLLYLEL. Residues 64 to 79 are Cytoplasmic-facing; that stretch reads AVGQRMRQGSIGAWRT. A helical transmembrane segment spans residues 80-100; it reads ISPYLSGVGVASVVVSFFLSM. Topologically, residues 101–165 are extracellular; that stretch reads YYNVINAWAF…ISPSLQENGG (65 aa). N-linked (GlcNAc...) asparagine glycosylation is present at Asn131. The chain crosses the membrane as a helical span at residues 166–186; sequence VQWEPALCLLLAWLVVYLCIL. Residues 187–194 lie on the Cytoplasmic side of the membrane; that stretch reads RGTESTGK. The helical transmembrane segment at 195–215 threads the bilayer; that stretch reads VVYFTASLPYCVLIIYLIRGL. Over 216-241 the chain is Extracellular; sequence TLHGATNGLMYMFTPKIEQLANPKAW. Residues 242–262 traverse the membrane as a helical segment; that stretch reads INAATQIFFSLGLGFGSLIAF. Topologically, residues 263–276 are cytoplasmic; the sequence is ASYNEPSNNCQKHA. The chain crosses the membrane as a helical span at residues 277–297; the sequence is IIVSLINSFTSIFASIVTFSI. Topologically, residues 298–389 are extracellular; that stretch reads YGFKATFNYE…EAIKNMEVSQ (92 aa). Residue Asn357 is glycosylated (N-linked (GlcNAc...) asparagine). A helical membrane pass occupies residues 390-410; the sequence is LWSVLYFFMLLMLGIGSMLGN. Residues 411–431 lie on the Cytoplasmic side of the membrane; it reads TAAILTPLTDSKIISSHLPKE. The chain crosses the membrane as a helical span at residues 432-452; that stretch reads AISGLVCLVNCAIGMVFTMEA. Over 453 to 465 the chain is Extracellular; sequence GNYWFDIFNDYAA. Residues 466-486 form a helical membrane-spanning segment; that stretch reads TLSLLLIVLVETIAVCYVYGL. Topologically, residues 487–504 are cytoplasmic; it reads RRFESDLKAMTGRAVSWY. A helical membrane pass occupies residues 505–525; that stretch reads WKVMWAGVSPLLIVSLFVFYL. Residues 526 to 554 are Extracellular-facing; that stretch reads SDYILTGTLKYQAWDASQGQLVTKDYPAY. A helical transmembrane segment spans residues 555-575; that stretch reads ALAVIGLLVASSTMCIPLAAL. Residues 576–592 are Cytoplasmic-facing; it reads GTFVQRRLKRGDADPVA.

This sequence belongs to the sodium:neurotransmitter symporter (SNF) (TC 2.A.22) family. SLC6A20 subfamily. In terms of tissue distribution, kidney and small intestine. Expressed in the S3 segment of the proximal tubule. Expressed in neurons.

It is found in the apical cell membrane. The catalysed reaction is L-proline(out) + chloride(out) + 2 Na(+)(out) = L-proline(in) + chloride(in) + 2 Na(+)(in). It catalyses the reaction L-pipecolate(out) + chloride(out) + 2 Na(+)(out) = L-pipecolate(in) + chloride(in) + 2 Na(+)(in). It carries out the reaction sarcosine(out) + chloride(out) + 2 Na(+)(out) = sarcosine(in) + chloride(in) + 2 Na(+)(in). The enzyme catalyses N-methyl-L-proline(out) + chloride(out) + 2 Na(+)(out) = N-methyl-L-proline(in) + chloride(in) + 2 Na(+)(in). The catalysed reaction is 2-methyl-2-(methylamino)propanoate(out) + chloride(out) + 2 Na(+)(out) = 2-methyl-2-(methylamino)propanoate(in) + chloride(in) + 2 Na(+)(in). It catalyses the reaction glycine betaine(out) + chloride(out) + 2 Na(+)(out) = glycine betaine(in) + chloride(in) + 2 Na(+)(in). It carries out the reaction glycine(out) + chloride(out) + 2 Na(+)(out) = glycine(in) + chloride(in) + 2 Na(+)(in). In terms of biological role, mediates the Na(+)- and Cl(-)-dependent uptake of imino acids such as L-proline, N-methyl-L-proline and pipecolate as well as N-methylated amino acids. Also transports glycine, regulates proline and glycine homeostasis in the brain playing a role in the modulation of NMDAR currents. The sequence is that of Sodium- and chloride-dependent transporter XTRP3 from Homo sapiens (Human).